Reading from the N-terminus, the 386-residue chain is Methionine aminopeptidase 1 (386 aa).

N-acetylalanine is present on Ala2. A C6H2-type zinc finger spans residues 6–59; sequence TRVCETDGCSSEAKLQCPTCIKLGIQGSYFCSQECFKGSWATHKLLHKKAKDEK. Residues Cys9, Cys14, Cys22, Cys25, Cys36, Cys40, His48, His52, and Lys53 each coordinate Zn(2+). A protein is bound at residue His203. Zn(2+)-binding residues include Asp220, Asp231, and His294. His301 serves as a coordination point for a protein. Residues Glu327 and Glu358 each coordinate Zn(2+).

The protein belongs to the peptidase M24A family. Methionine aminopeptidase type 1 subfamily. As to quaternary structure, associates with the 60S ribosomal subunit of the 80S translational complex. Zn(2+) is required as a cofactor. It depends on Co(2+) as a cofactor. The cofactor is Mn(2+). Fe(2+) serves as cofactor.

It is found in the cytoplasm. The enzyme catalyses Release of N-terminal amino acids, preferentially methionine, from peptides and arylamides.. Its function is as follows. Cotranslationally removes the N-terminal methionine from nascent proteins. The N-terminal methionine is often cleaved when the second residue in the primary sequence is small and uncharged (Met-Ala-, Cys, Gly, Pro, Ser, Thr, or Val). The chain is Methionine aminopeptidase 1 (Metap1) from Mus musculus (Mouse).